A 205-amino-acid polypeptide reads, in one-letter code: Thymidylate kinase (205 aa).

10 to 17 (GIDGAGKS) contributes to the ATP binding site.

This sequence belongs to the thymidylate kinase family.

It carries out the reaction dTMP + ATP = dTDP + ADP. In terms of biological role, phosphorylation of dTMP to form dTDP in both de novo and salvage pathways of dTTP synthesis. This is Thymidylate kinase from Ralstonia pickettii (strain 12J).